The chain runs to 673 residues: UvrABC system protein B (673 aa).

The Helicase ATP-binding domain maps to 30–417; that stretch reads NSILLGNKYQ…SSVVVDQIIR (388 aa). Residue 43-50 coordinates ATP; sequence GVTGSGKT. The Beta-hairpin motif lies at 96–119; it reads YYDYYQPESYVPSKDLFIEKEATI. The Helicase C-terminal domain occupies 434–600; it reads QMEDLYSEIQ…TIVKKIQNIL (167 aa). The UVR domain maps to 627 to 662; that stretch reads KKLIDKLKFDLEEAVNDERFEDAIVLRDKIKELSSK.

The protein belongs to the UvrB family. In terms of assembly, forms a heterotetramer with UvrA during the search for lesions. Interacts with UvrC in an incision complex.

It localises to the cytoplasm. The UvrABC repair system catalyzes the recognition and processing of DNA lesions. A damage recognition complex composed of 2 UvrA and 2 UvrB subunits scans DNA for abnormalities. Upon binding of the UvrA(2)B(2) complex to a putative damaged site, the DNA wraps around one UvrB monomer. DNA wrap is dependent on ATP binding by UvrB and probably causes local melting of the DNA helix, facilitating insertion of UvrB beta-hairpin between the DNA strands. Then UvrB probes one DNA strand for the presence of a lesion. If a lesion is found the UvrA subunits dissociate and the UvrB-DNA preincision complex is formed. This complex is subsequently bound by UvrC and the second UvrB is released. If no lesion is found, the DNA wraps around the other UvrB subunit that will check the other stand for damage. The chain is UvrABC system protein B from Borreliella burgdorferi (strain ATCC 35210 / DSM 4680 / CIP 102532 / B31) (Borrelia burgdorferi).